The primary structure comprises 592 residues: Arginine--tRNA ligase (592 aa).

A 'HIGH' region motif is present at residues 134–144; sequence ANPTGPLHVGH.

Belongs to the class-I aminoacyl-tRNA synthetase family. As to quaternary structure, monomer.

Its subcellular location is the cytoplasm. The catalysed reaction is tRNA(Arg) + L-arginine + ATP = L-arginyl-tRNA(Arg) + AMP + diphosphate. This chain is Arginine--tRNA ligase, found in Coxiella burnetii (strain RSA 493 / Nine Mile phase I).